Consider the following 533-residue polypeptide: Atypical kinase COQ8B, mitochondrial (533 aa).

Residues 93–109 form a helical membrane-spanning segment; it reads LASFGGLAVGLGLGALA. The KxGQ motif motif lies at 156–159; that stretch reads KIGQ. Residues 192–424 enclose the Protein kinase domain; that stretch reads MMRVLEEELG…DRVLQKSQDL (233 aa). The AAAS motif signature appears at 217–220; it reads AAAS. ATP-binding positions include serine 220, lysine 238, and 325 to 328; that span reads MELA. Residue aspartate 368 is the Proton acceptor of the active site. Residues asparagine 373 and aspartate 387 each coordinate ATP.

This sequence belongs to the protein kinase superfamily. ADCK protein kinase family. In terms of assembly, homodimer; homodimerizes via its transmembrane region. Interacts with COQ6 and COQ7. Interacts with the multi-subunit COQ enzyme complex, composed of at least COQ3, COQ4, COQ5, COQ6, COQ7 and COQ9.

It is found in the mitochondrion membrane. It localises to the cytoplasm. Its subcellular location is the cytosol. The protein resides in the cell membrane. Its pathway is cofactor biosynthesis; ubiquinone biosynthesis. Atypical kinase involved in the biosynthesis of coenzyme Q, also named ubiquinone, an essential lipid-soluble electron transporter for aerobic cellular respiration. Its substrate specificity is still unclear: may act as a protein kinase that mediates phosphorylation of COQ3. According to other reports, acts as a small molecule kinase, possibly a lipid kinase that phosphorylates a prenyl lipid in the ubiquinone biosynthesis pathway, as suggested by its ability to bind coenzyme Q lipid intermediates. However, the small molecule kinase activity was not confirmed by another publication. Required for podocyte migration. The sequence is that of Atypical kinase COQ8B, mitochondrial from Mus musculus (Mouse).